A 447-amino-acid polypeptide reads, in one-letter code: Elongation factor 1-alpha (447 aa).

The tr-type G domain maps to 5–230 (KVHINIVVIG…DNINEPKRPS (226 aa)). The tract at residues 14–21 (GHVDSGKS) is G1. A GTP-binding site is contributed by 14-21 (GHVDSGKS). K55 carries the N6,N6-dimethyllysine modification. The interval 70 to 74 (GITID) is G2. K79 carries the post-translational modification N6,N6,N6-trimethyllysine. Residues 91–94 (DAPG) are G3. Residues 91 to 95 (DAPGH) and 153 to 156 (NKMD) each bind GTP. The tract at residues 153–156 (NKMD) is G4. K187 carries the N6,N6,N6-trimethyllysine modification. The segment at 194–196 (SGF) is G5. The residue at position 261 (K261) is an N6-methyllysine. E289 is modified (5-glutamyl glycerylphosphorylethanolamine). The residue at position 306 (K306) is an N6,N6,N6-trimethyllysine. Residue E362 is modified to 5-glutamyl glycerylphosphorylethanolamine. K396 bears the N6,N6,N6-trimethyllysine mark.

It belongs to the TRAFAC class translation factor GTPase superfamily. Classic translation factor GTPase family. EF-Tu/EF-1A subfamily.

It localises to the cytoplasm. Its function is as follows. This protein promotes the GTP-dependent binding of aminoacyl-tRNA to the A-site of ribosomes during protein biosynthesis. The polypeptide is Elongation factor 1-alpha (Vicia faba (Broad bean)).